Consider the following 171-residue polypeptide: MAKSNYITREGWQALDRELHYLWREERPVVTQAVSEAAAMGDRSENAEYIYGKKRLREIDRRVRFLAKRLEVLKIVDPDPRQEGKVFFGAWVRVENEQEEQRIFRLVGPDEFDPAKKWISIDSPVARALIGKQVDDEVTVQTPNGEATYWILEIRYRPFDEDRPFNEDIDN.

Positions 53 to 75 (KKRLREIDRRVRFLAKRLEVLKI) form a coiled coil.

It belongs to the GreA/GreB family. GreB subfamily.

In terms of biological role, necessary for efficient RNA polymerase transcription elongation past template-encoded arresting sites. The arresting sites in DNA have the property of trapping a certain fraction of elongating RNA polymerases that pass through, resulting in locked ternary complexes. Cleavage of the nascent transcript by cleavage factors such as GreA or GreB allows the resumption of elongation from the new 3'terminus. GreB releases sequences of up to 9 nucleotides in length. The protein is Transcription elongation factor GreB of Yersinia pestis.